We begin with the raw amino-acid sequence, 686 residues long: Calponin homology and LIM domain-containing protein (686 aa).

A Calponin-homology (CH) domain is found at 15–120 (ELALDESRDW…ITLYWLGRAA (106 aa)). 2 consecutive LIM zinc-binding domains span residues 139-200 (MNCS…ATNL) and 219-279 (NKCS…SCGK). The segment covering 305-314 (KQVMDKDGHD) has biased composition (basic and acidic residues). The tract at residues 305-345 (KQVMDKDGHDHHHHNHNKPTTTTTTTNSNSPLAKKKSDSCK) is disordered. Residues 322–333 (KPTTTTTTTNSN) are compositionally biased toward low complexity. 4 consecutive LIM zinc-binding domains span residues 373–435 (GTCG…NNKS), 437–495 (KNCH…LNQY), 519–579 (DRCV…IQQS), and 583–658 (DHCA…ASSS).

In terms of assembly, interacts with limF and rab21.

Its function is as follows. Involved in the regulation of phagocytosis. May repress rab21. The protein is Calponin homology and LIM domain-containing protein (ChLim) of Dictyostelium discoideum (Social amoeba).